The primary structure comprises 138 residues: Thyrotropin subunit beta (138 aa).

The signal sequence occupies residues 1–20 (MTAIFLMSMVFGLACGQTMS). Disulfide bonds link Cys22–Cys72, Cys36–Cys87, Cys39–Cys125, Cys47–Cys103, Cys51–Cys105, and Cys108–Cys115. A glycan (N-linked (GlcNAc...) asparagine) is linked at Asn43. A propeptide spanning residues 133 to 138 (VVEFSI) is cleaved from the precursor.

It belongs to the glycoprotein hormones subunit beta family. As to quaternary structure, heterodimer of a common alpha chain and a unique beta chain which confers biological specificity to thyrotropin, lutropin, follitropin and gonadotropin.

It is found in the secreted. Functionally, indispensable for the control of thyroid structure and metabolism. The protein is Thyrotropin subunit beta (TSHB) of Equus caballus (Horse).